The primary structure comprises 108 residues: Nucleoid-associated protein BP1550 (108 aa).

The interval 87–108 (SQEKMASVTAGMPLPPGMKLPF) is disordered. A compositionally biased stretch (pro residues) spans 99–108 (PLPPGMKLPF).

The protein belongs to the YbaB/EbfC family. Homodimer.

Its subcellular location is the cytoplasm. The protein resides in the nucleoid. Binds to DNA and alters its conformation. May be involved in regulation of gene expression, nucleoid organization and DNA protection. The sequence is that of Nucleoid-associated protein BP1550 from Bordetella pertussis (strain Tohama I / ATCC BAA-589 / NCTC 13251).